Reading from the N-terminus, the 229-residue chain is uncharacterized protein (229 aa).

7 helical membrane passes run 21-41 (IYSLVGMGVGLSAFVSYLMLY), 56-76 (MIYYGAAIIELILVFVASGAA), 83-103 (ALPIFLIYAALNGFTLSFIIV), 109-129 (TVFQAFLSSAAVFFAMSIIGV), 141-161 (AMFAALIGVVVASLINLFIGS), 162-182 (GMMSYVISVISVLIFSGLIAS), and 202-222 (WAVAMALSLYLDFINLFISLL).

It belongs to the BI1 family.

It is found in the cell membrane. This is an uncharacterized protein from Streptococcus pyogenes serotype M3 (strain ATCC BAA-595 / MGAS315).